A 121-amino-acid polypeptide reads, in one-letter code: Small ribosomal subunit protein uS11 (121 aa).

This sequence belongs to the universal ribosomal protein uS11 family. In terms of assembly, part of the 30S ribosomal subunit. Interacts with proteins S7 and S18. Binds to IF-3.

Functionally, located on the platform of the 30S subunit, it bridges several disparate RNA helices of the 16S rRNA. Forms part of the Shine-Dalgarno cleft in the 70S ribosome. The chain is Small ribosomal subunit protein uS11 from Mycoplasmoides gallisepticum (strain R(low / passage 15 / clone 2)) (Mycoplasma gallisepticum).